The following is a 369-amino-acid chain: Opsin Rh6 (369 aa).

The Extracellular segment spans residues 1-46 (MASLHPPSFAYMRDGRNLSLAESVPAEIMHMVDPYWYQWPPLEPMW). N-linked (GlcNAc...) asparagine glycosylation occurs at Asn-17. A helical membrane pass occupies residues 47 to 71 (FGIIGFVIAILGTMSLAGNFIVMYI). The Cytoplasmic segment spans residues 72–83 (FTSSKGLRTPSN). A helical transmembrane segment spans residues 84-109 (MFVVNLAFSDFMMMFTMFPPVVLNGF). Residues 110–123 (YGTWIMGPFLCELY) lie on the Extracellular side of the membrane. The cysteines at positions 120 and 197 are disulfide-linked. The helical transmembrane segment at 124–143 (GMFGSLFGCVSIWSMTLIAY) threads the bilayer. The Cytoplasmic portion of the chain corresponds to 144–162 (DRYCVIVKGMARKPLTATA). A helical transmembrane segment spans residues 163–186 (AVLRLMVVWTICGAWALMPLFGWN). The Extracellular segment spans residues 187–210 (RYVPEGNMTACGTDYFAKDWWNRS). N-linked (GlcNAc...) asparagine glycosylation is found at Asn-193 and Asn-208. Residues 211–238 (YIIVYSLWVYLTPLLTIIFSYWHIMKAV) form a helical membrane-spanning segment. The Cytoplasmic portion of the chain corresponds to 239–274 (AAHEKAMREQAKKMNVASLRNSEADKSKAIEIKLAK). The helical transmembrane segment at 275–298 (VALTTISLWFFAWTPYTIINYAGI) threads the bilayer. Topologically, residues 299–305 (FESMHLS) are extracellular. Residues 306–330 (PLSTICGSVFAKANAVCNPIVYGLS) form a helical membrane-spanning segment. Lys-317 carries the post-translational modification N6-(retinylidene)lysine. At 331-369 (HPKYKQVLREKMPCLACGKDDLTSDSRTQATAEISESQA) the chain is on the cytoplasmic side.

This sequence belongs to the G-protein coupled receptor 1 family. Opsin subfamily. In terms of processing, phosphorylated on some or all of the serine and threonine residues present in the C-terminal region. Each Drosophila eye is composed of 800 facets or ommatidia. Each ommatidium contains 8 photoreceptor cells (R1-R8), the R1 to R6 cells are outer cells, while R7 and R8 are inner cells. Rh6 is expressed in a subset of R8 cells, most likely expressed in the subset of R8 cells paired with Rh4-expressing R7 cells (R7y).

The protein localises to the membrane. Functionally, visual pigments are the light-absorbing molecules that mediate vision. They consist of an apoprotein, opsin, covalently linked to cis-retinal. The polypeptide is Opsin Rh6 (Rh6) (Drosophila melanogaster (Fruit fly)).